A 205-amino-acid polypeptide reads, in one-letter code: MAQQLAREQGITLRGSAEIVAEFFSFGINSILYQRGIYPSETFTRVQKYGLTLLTTTDPELIKYLNNVVEQLKEWLYKCSVQKLVVVISNIESGEVLERWQFDIECDKTAKEEGVRREKSQKAIQDEIRSVIRQITATVTFLPLLEVSCSFDLLIYTDKDLVVPEKWEESGPQFITNCEEVRLRSFTTTIHKVNSMVAYKTPVND.

Residue Ala-2 is modified to N-acetylalanine. The 184-residue stretch at 14–197 (RGSAEIVAEF…TTIHKVNSMV (184 aa)) folds into the HORMA domain. Residues Ser-130, Ser-170, Ser-185, and Ser-195 each carry the phosphoserine modification. Residues 195–205 (SMVAYKTPVND) form a required for assuming the closed conformation and for interaction with CDC20 region.

This sequence belongs to the MAD2 family. In terms of assembly, monomer and homodimer. Heterodimerizes with MAD2L1 in order to form a tetrameric MAD1L1-MAD2L1 core complex. In the closed and open conformation, interacts with MAD1L1. Formation of a heterotetrameric core complex containing two molecules each of MAD1L1 and of MAD2L1 promotes binding of another molecule of MAD2L1 to each MAD2L1, resulting in a heterohexamer. Interacts with MAD2L1BP. Interacts with ADAM17/TACE. Interacts with CDC20. Dimeric MAD2L1 in the closed conformation interacts with CDC20. Monomeric MAD2L1 in the open conformation does not interact with CDC20. CDC20 competes with MAD1L1 for MAD2L1 binding. In the closed conformation, interacts with BUB1B. Interacts with TTK. Interacts with TPR. Binds to UBD (via ubiquitin-like 1 domain) during mitosis. Interacts with isoform 1 and isoform 2 of NEK2. Interacts with HSF1; this interaction occurs in mitosis. In terms of processing, phosphorylated on multiple serine residues. The level of phosphorylation varies during the cell cycle and is highest during mitosis. Phosphorylation abolishes interaction with MAD1L1 and reduces interaction with CDC20. Phosphorylated by NEK2.

Its subcellular location is the nucleus. It is found in the chromosome. The protein resides in the centromere. It localises to the kinetochore. The protein localises to the cytoplasm. Its subcellular location is the cytoskeleton. It is found in the spindle pole. Functionally, component of the spindle-assembly checkpoint that prevents the onset of anaphase until all chromosomes are properly aligned at the metaphase plate. In the closed conformation (C-MAD2) forms a heterotetrameric complex with MAD1L1 at unattached kinetochores during prometaphase, and recruits an open conformation of MAD2L1 (O-MAD2) which then promotes the conversion of O-MAD2 to C-MAD2. Required for the execution of the mitotic checkpoint which monitors the process of kinetochore-spindle attachment and inhibits the activity of the anaphase promoting complex by sequestering CDC20 until all chromosomes are aligned at the metaphase plate. The protein is Mitotic spindle assembly checkpoint protein MAD2A (Mad2l1) of Mus musculus (Mouse).